Here is a 116-residue protein sequence, read N- to C-terminus: MRHRCRVPQLGKAADQRKALLRSLTTELIRHGQIKTTKTRAKAVRSEVERMITLAKDGSLSARRRAIGYLYDKQLVHALFAEAPERYSNRKGGYTRIVRTLRRRGDNAEMAIIELM.

This sequence belongs to the bacterial ribosomal protein bL17 family. Part of the 50S ribosomal subunit. Contacts protein L32.

This chain is Large ribosomal subunit protein bL17, found in Crocosphaera subtropica (strain ATCC 51142 / BH68) (Cyanothece sp. (strain ATCC 51142)).